The chain runs to 301 residues: uncharacterized protein (301 aa).

9 consecutive transmembrane segments (helical) span residues 1–21, 33–53, 72–92, 101–121, 124–144, 185–205, 220–240, 246–266, and 270–290; these read MSWI…LGIV, SVLF…YFYY, AMSL…KIPG, FGII…TILI, FAWL…KTFY, YFTP…VFAI, IIYT…FCLA, FSYI…KIFI, and IAIP…FGII.

This sequence belongs to the TerC family.

The protein localises to the cell membrane. This is an uncharacterized protein from Rickettsia felis (strain ATCC VR-1525 / URRWXCal2) (Rickettsia azadi).